An 81-amino-acid polypeptide reads, in one-letter code: uncharacterized protein (81 aa).

Residues 11–34 are disordered; that stretch reads GSVSSSNKVSVANGSSSSSFGSNG.

This is an uncharacterized protein from Dictyostelium discoideum (Social amoeba).